Consider the following 181-residue polypeptide: Small ribosomal subunit protein cS23 (181 aa).

The interval 1–40 (MLPMSVHPATTPALASRPRVSLPRPSTPSSSSSLVHLKSR) is disordered. Over residues 14-36 (LASRPRVSLPRPSTPSSSSSLVH) the composition is skewed to low complexity.

Belongs to the chloroplast-specific ribosomal protein cS23 family. As to quaternary structure, part of the 30S ribosomal subunit.

It is found in the plastid. The protein localises to the chloroplast. Functionally, component of the chloroplast ribosome (chloro-ribosome), a dedicated translation machinery responsible for the synthesis of chloroplast genome-encoded proteins, including proteins of the transcription and translation machinery and components of the photosynthetic apparatus. This is Small ribosomal subunit protein cS23 (PSRP3) from Hordeum vulgare (Barley).